Reading from the N-terminus, the 68-residue chain is Small ribosomal subunit protein bS21 (68 aa).

The protein belongs to the bacterial ribosomal protein bS21 family.

In Endomicrobium trichonymphae, this protein is Small ribosomal subunit protein bS21.